Here is a 61-residue protein sequence, read N- to C-terminus: Small ribosomal subunit protein bS21 (61 aa).

The tract at residues 34–61 (KREHYESPSVKRKKKSEAARKRKYKYNK) is disordered. Basic residues predominate over residues 43–61 (VKRKKKSEAARKRKYKYNK).

This sequence belongs to the bacterial ribosomal protein bS21 family.

In Thermoanaerobacter pseudethanolicus (strain ATCC 33223 / 39E) (Clostridium thermohydrosulfuricum), this protein is Small ribosomal subunit protein bS21.